The following is a 213-amino-acid chain: MKPYQRQFIEFALSKQVLKFGEFTLKSGRKSPYFFNAGLFNTGRDLALLGRFYAEALVDSGIEFDLLFGPAYKGIPIATTTAVALAEHHDLDLPYCFNRKEAKDHGEGGNLVGSALQGRIMLVDDVITAGTAIRESMEIIQANGATLAGVLISLDRQERGRGEISAIQEVERDYNCKVISIITLKDLIAYLEEKPEMAEHLAAVKAYREEFGV.

Lys-26 lines the 5-phospho-alpha-D-ribose 1-diphosphate pocket. 34–35 (FF) is an orotate binding site. Residues 72–73 (YK), Arg-99, Lys-100, Lys-103, His-105, and 124–132 (DDVITAGTA) contribute to the 5-phospho-alpha-D-ribose 1-diphosphate site. Positions 128 and 156 each coordinate orotate.

The protein belongs to the purine/pyrimidine phosphoribosyltransferase family. PyrE subfamily. Homodimer. Mg(2+) serves as cofactor.

It catalyses the reaction orotidine 5'-phosphate + diphosphate = orotate + 5-phospho-alpha-D-ribose 1-diphosphate. It functions in the pathway pyrimidine metabolism; UMP biosynthesis via de novo pathway; UMP from orotate: step 1/2. Catalyzes the transfer of a ribosyl phosphate group from 5-phosphoribose 1-diphosphate to orotate, leading to the formation of orotidine monophosphate (OMP). In Escherichia coli O45:K1 (strain S88 / ExPEC), this protein is Orotate phosphoribosyltransferase.